The sequence spans 707 residues: MAREYPLERYRNFGIIAHIDAGKTTTTERVLYYTGKSHKIGEVHDGAATMDWMEQEQERGITITSAATTTFWERTEDGSTALSPKYRFNIIDTPGHVDFTIEVERSLAVLDGAVVLLDGNAGVEPQTETVWRQADRYKVPRIVFVNKMDKTGADFFNCVAMIKDRTGATPAPIQMPIGSETELEGHIDLVTMTEWVWEGEDLGASWVLRPVRESLKAKAEEMRAHLVELAVEMDDAAMEAFLEGKEPDVPALRALIRKGTLALKFVPILCGSAFKNKGVQPMLNGVVDYLPSPLDVPAYLGFKPGDETETRDIPRSADDGQPFAGLAFKIMNDPYMGTLTFTRIYSGKLSKGDAFLNATKGKKERVGRMVMMHANKQDEITEAFAGDIVALAGLKETTTGDTVCDPAQPVVLETMTFPQPVIEIAVEPKTKADQEKMSVGLQRLAAEDPSFRVETNFESGQTIMKGMGELHLDILIDRLRREFKVEANIGQPQVAYREKIGRAADIDYTHKKQSGGTGQFARIKLTFEPLEAGSGFQFVSAIVGGAVPKEYIPGVQKGLEMAKENGLLAGYPVTDFRATLTDGAFHDVDSSVLAFEIAARGAFRELKGKGDPRLMEPIMKVEVVTPEDYMGDVIGDLNSRRGQIQGSEARGIATAITAMVPLVNMFGYVSNLRGMSQGRAQFTMFFDHYDEVPRAEAQKIIQEVSGS.

Residues 8–294 (ERYRNFGIIA…GVVDYLPSPL (287 aa)) form the tr-type G domain. Residues 17–24 (AHIDAGKT), 92–96 (DTPGH), and 146–149 (NKMD) contribute to the GTP site.

Belongs to the TRAFAC class translation factor GTPase superfamily. Classic translation factor GTPase family. EF-G/EF-2 subfamily.

It is found in the cytoplasm. Its function is as follows. Catalyzes the GTP-dependent ribosomal translocation step during translation elongation. During this step, the ribosome changes from the pre-translocational (PRE) to the post-translocational (POST) state as the newly formed A-site-bound peptidyl-tRNA and P-site-bound deacylated tRNA move to the P and E sites, respectively. Catalyzes the coordinated movement of the two tRNA molecules, the mRNA and conformational changes in the ribosome. This chain is Elongation factor G, found in Hyphomonas neptunium (strain ATCC 15444).